The primary structure comprises 197 residues: Imidazoleglycerol-phosphate dehydratase (197 aa).

It belongs to the imidazoleglycerol-phosphate dehydratase family.

The protein localises to the cytoplasm. The catalysed reaction is D-erythro-1-(imidazol-4-yl)glycerol 3-phosphate = 3-(imidazol-4-yl)-2-oxopropyl phosphate + H2O. It participates in amino-acid biosynthesis; L-histidine biosynthesis; L-histidine from 5-phospho-alpha-D-ribose 1-diphosphate: step 6/9. In Clostridium acetobutylicum (strain ATCC 824 / DSM 792 / JCM 1419 / IAM 19013 / LMG 5710 / NBRC 13948 / NRRL B-527 / VKM B-1787 / 2291 / W), this protein is Imidazoleglycerol-phosphate dehydratase.